A 226-amino-acid polypeptide reads, in one-letter code: Leucyl/phenylalanyl-tRNA--protein transferase (226 aa).

This sequence belongs to the L/F-transferase family.

The protein localises to the cytoplasm. It carries out the reaction N-terminal L-lysyl-[protein] + L-leucyl-tRNA(Leu) = N-terminal L-leucyl-L-lysyl-[protein] + tRNA(Leu) + H(+). It catalyses the reaction N-terminal L-arginyl-[protein] + L-leucyl-tRNA(Leu) = N-terminal L-leucyl-L-arginyl-[protein] + tRNA(Leu) + H(+). The enzyme catalyses L-phenylalanyl-tRNA(Phe) + an N-terminal L-alpha-aminoacyl-[protein] = an N-terminal L-phenylalanyl-L-alpha-aminoacyl-[protein] + tRNA(Phe). Its function is as follows. Functions in the N-end rule pathway of protein degradation where it conjugates Leu, Phe and, less efficiently, Met from aminoacyl-tRNAs to the N-termini of proteins containing an N-terminal arginine or lysine. The protein is Leucyl/phenylalanyl-tRNA--protein transferase of Bradyrhizobium diazoefficiens (strain JCM 10833 / BCRC 13528 / IAM 13628 / NBRC 14792 / USDA 110).